Reading from the N-terminus, the 319-residue chain is MATTKPYRVLLYYMYTTIENPEEFAEQHLEFCKSLELKGRILVATEGINGTCSGTVEQTEKYVEAMNNDPRFAGIVFKIDEADEHAFKKMHVRPRSELVTLRLEDDINPKEITGKYLEPKDFYEAMKQEDTVIIDARNDYEFDLGHFKGAIKPDIESFRELPDWIRENKETLEGKKILTYCTGGIRCEKFSGWLVREGYEDVSQLHGGIVTYGKDPEVQGELWDGQCYVFDERIAVPVNQKEHVIVGKDHFTGEPCERYVNCANPECNKKILCSEESEAKHLRACSHECRVHPRNRYIVQHELTEEQVAATLEKIEAGK.

The Rhodanese domain occupies 127–221 (KQEDTVIIDA…YGKDPEVQGE (95 aa)). Cys-181 functions as the Cysteine persulfide intermediate in the catalytic mechanism.

This sequence belongs to the TrhO family.

It catalyses the reaction uridine(34) in tRNA + AH2 + O2 = 5-hydroxyuridine(34) in tRNA + A + H2O. Catalyzes oxygen-dependent 5-hydroxyuridine (ho5U) modification at position 34 in tRNAs. The polypeptide is tRNA uridine(34) hydroxylase (Bacillus mycoides (strain KBAB4) (Bacillus weihenstephanensis)).